Reading from the N-terminus, the 418-residue chain is Serine/threonine-protein kinase PCRK1 (418 aa).

Residues 36–63 (GSEFNSRDVSGTSTESSMGRKNSYPPVS) form a disordered region. The Protein kinase domain occupies 84 to 369 (FSRSVMIGEG…EVLEMVNKIV (286 aa)). Residues 90 to 98 (IGEGGFGCV) and lysine 118 contribute to the ATP site. Aspartate 218 acts as the Proton acceptor in catalysis. Phosphoserine is present on residues serine 373, serine 377, and serine 385.

It belongs to the protein kinase superfamily. Ser/Thr protein kinase family. As to quaternary structure, interacts with FLS2.

It localises to the cell membrane. It carries out the reaction L-seryl-[protein] + ATP = O-phospho-L-seryl-[protein] + ADP + H(+). The catalysed reaction is L-threonyl-[protein] + ATP = O-phospho-L-threonyl-[protein] + ADP + H(+). In terms of biological role, involved in the activation of early immune responses. Plays a role in pattern-triggered immunity (PTI) induced by pathogen-associated molecular patterns (PAMPs) and damage-associated molecular patterns (DAMPs). Contributes to PTI in response to the bacterial pathogen Pseudomonas syringae pv maculicola strain ES4326. Contributes to PTI in response to the bacterial pathogen Pseudomonas syringae pv tomato strain DC3000. Functions redundantly with PCRK2 in basal resistance against bacterial pathogens and in regulation of plant immunity. Functions together with PCRK2 downstream of the PAMP receptor FLS2. Contributes to the induction of SARD1 and CBP60G, which are transcriptional activator of ICS1, an enzyme involved in salicylate (SA) biosynthesis upon pathogen attack. In Arabidopsis thaliana (Mouse-ear cress), this protein is Serine/threonine-protein kinase PCRK1.